The sequence spans 496 residues: uncharacterized protein (496 aa).

Over residues 118–129 the composition is skewed to basic and acidic residues; sequence LDRPFIKPRREN. The disordered stretch occupies residues 118 to 187; it reads LDRPFIKPRR…NPHQSNRNTS (70 aa). The segment covering 151–187 has biased composition (polar residues); the sequence is TSDSQYASPFENHSITNLPIGQKQPFNNPHQSNRNTS.

This is an uncharacterized protein from Acanthamoeba polyphaga mimivirus (APMV).